The primary structure comprises 648 residues: Transketolase (648 aa).

Residue H22 participates in substrate binding. Thiamine diphosphate contacts are provided by residues H62 and 109 to 111 (GPL). D150 contributes to the Mg(2+) binding site. The thiamine diphosphate site is built by G151 and N180. 2 residues coordinate Mg(2+): N180 and V182. Substrate contacts are provided by H252, R345, and S372. Residue H252 participates in thiamine diphosphate binding. E397 (proton donor) is an active-site residue. F423 is a thiamine diphosphate binding site. Residues H447, D455, and R506 each coordinate substrate.

Belongs to the transketolase family. In terms of assembly, homodimer. Mg(2+) serves as cofactor. The cofactor is Ca(2+). Requires Mn(2+) as cofactor. Co(2+) is required as a cofactor. It depends on thiamine diphosphate as a cofactor.

The enzyme catalyses D-sedoheptulose 7-phosphate + D-glyceraldehyde 3-phosphate = aldehydo-D-ribose 5-phosphate + D-xylulose 5-phosphate. Functionally, catalyzes the transfer of a two-carbon ketol group from a ketose donor to an aldose acceptor, via a covalent intermediate with the cofactor thiamine pyrophosphate. The protein is Transketolase (tkt) of Mycoplasma pneumoniae (strain ATCC 29342 / M129 / Subtype 1) (Mycoplasmoides pneumoniae).